Here is a 283-residue protein sequence, read N- to C-terminus: Bifunctional protein FolD (283 aa).

NADP(+)-binding positions include Gly-165–Ser-167 and Ser-190.

This sequence belongs to the tetrahydrofolate dehydrogenase/cyclohydrolase family. As to quaternary structure, homodimer.

The catalysed reaction is (6R)-5,10-methylene-5,6,7,8-tetrahydrofolate + NADP(+) = (6R)-5,10-methenyltetrahydrofolate + NADPH. It catalyses the reaction (6R)-5,10-methenyltetrahydrofolate + H2O = (6R)-10-formyltetrahydrofolate + H(+). Its pathway is one-carbon metabolism; tetrahydrofolate interconversion. Catalyzes the oxidation of 5,10-methylenetetrahydrofolate to 5,10-methenyltetrahydrofolate and then the hydrolysis of 5,10-methenyltetrahydrofolate to 10-formyltetrahydrofolate. This is Bifunctional protein FolD from Cupriavidus pinatubonensis (strain JMP 134 / LMG 1197) (Cupriavidus necator (strain JMP 134)).